Here is a 126-residue protein sequence, read N- to C-terminus: MADLNAIADQIQGLTLLEASQLVKMLEEKLGVSAAAAVAAPAAGGGAAAAAPAAEEKTEFTVVLTGAGANKINVIKAVREVTSLGLKEAKDLVDGAPKPIKEGVSKEEAATIAKKFTDAGATVEVK.

The protein belongs to the bacterial ribosomal protein bL12 family. In terms of assembly, homodimer. Part of the ribosomal stalk of the 50S ribosomal subunit. Forms a multimeric L10(L12)X complex, where L10 forms an elongated spine to which 2 to 4 L12 dimers bind in a sequential fashion. Binds GTP-bound translation factors.

Its function is as follows. Forms part of the ribosomal stalk which helps the ribosome interact with GTP-bound translation factors. Is thus essential for accurate translation. This Solibacter usitatus (strain Ellin6076) protein is Large ribosomal subunit protein bL12.